The chain runs to 487 residues: MSLKIYNTLTGKKEDFAPIKPGEVKIYTCGVTVYDYNHVGHGRSLIVFDMIRRYLRYLGYNVIFVRNFTDVDDKIINRAKNECLPFSVISDKFIKEYFDDAEKFRIEPADIEPRVTTHIPDIINFIQKLVDAGYAYEADGDVYFSVRKFKEYGKLSKRSIDELLAGARIEPGEKKKDPLDFALWKSAKAGEPYWESPWGKGRPGWHTECCAMIFKHLGETIDIHGGGLDLTFPHHENEIAQAEALTGKPFARYWIHNGLVTVNGQKMSKSLGNYIKLKEIYSKYEPDILRLLVLSVHYRSPLDFSWDKMEETKKAYERLKNAIEEAEVLNKLPIDENFEGDLYNAIQKAQSGFYSAMSDDFNTPEALASLFGLVREMNILRDKAIKHGGISKKAIESYKEAAKTLHDIGRDIFGLFDSLQPCIKQEEVKVKEKEESINEDLIQVLIEAREKARKEKQFTIADLIRDKLAEKGIILEDAPFGTKWKKA.

Cys-29 contributes to the Zn(2+) binding site. Residues 31–41 (VTVYDYNHVGH) carry the 'HIGH' region motif. Zn(2+) contacts are provided by Cys-209, His-234, and Glu-238. The 'KMSKS' region signature appears at 266–270 (KMSKS). Lys-269 is a binding site for ATP.

The protein belongs to the class-I aminoacyl-tRNA synthetase family. In terms of assembly, monomer. It depends on Zn(2+) as a cofactor.

The protein localises to the cytoplasm. The catalysed reaction is tRNA(Cys) + L-cysteine + ATP = L-cysteinyl-tRNA(Cys) + AMP + diphosphate. In Sulfurihydrogenibium sp. (strain YO3AOP1), this protein is Cysteine--tRNA ligase.